A 290-amino-acid chain; its full sequence is Nucleoid occlusion protein (290 aa).

Residues 153 to 172 constitute a DNA-binding region (H-T-H motif); the sequence is EALAQRLGKGQSTIANKLRL.

It belongs to the ParB family.

The protein resides in the cytoplasm. It is found in the nucleoid. Its function is as follows. Effects nucleoid occlusion by binding relatively nonspecifically to DNA and preventing the assembly of the division machinery in the vicinity of the nucleoid, especially under conditions that disturb the cell cycle. It helps to coordinate cell division and chromosome segregation by preventing the formation of the Z ring through the nucleoid, which would cause chromosome breakage. This Bacillus cytotoxicus (strain DSM 22905 / CIP 110041 / 391-98 / NVH 391-98) protein is Nucleoid occlusion protein.